A 444-amino-acid polypeptide reads, in one-letter code: MVDHISPRASPGPIRSSQTRRARKLRDSCTSCASSKVRCTKEKPACARCIERGLACQYMVSKRMGRNPRAPSPLDSTRRPSESLPSAGSEQGLPAHNTYSTPHAHTQAHTHAHSHPQPHPQSHPQSNQPPHALPTPNGSSSVSAIFSHQSPPPLVETQGLGGDLAGQAQSTLSSLTVDSEFGGSLQSMEHGNHADFLAESTGSLFDAFLEVGTPMIDPFLESAPLPPFQARYCCFSLALQTLTCLFPHAPLGCQLRLTDGEDSSCNLMTTDMVISGNKKATDAVRKILGCSCAQDGYLLSMVVLIVLKVLGWYAAAAGTQCTSTAAGGETNSGSCSNSPATVSSGCLTEERVLHHPSMVGEDCVDEEDQPRVAAQLVLSELHRVQSLVNLLAKRLQEGGDDAAGIPAHHPASPFSLLGFSGLEANLRHRLRAVSSDIIDYLHRE.

The disordered stretch occupies residues 1-26; that stretch reads MVDHISPRASPGPIRSSQTRRARKLR. Positions 29-56 form a DNA-binding region, zn(2)-C6 fungal-type; sequence CTSCASSKVRCTKEKPACARCIERGLAC. A disordered region spans residues 64–167; the sequence is MGRNPRAPSP…QGLGGDLAGQ (104 aa). Positions 106 to 116 are enriched in basic residues; it reads TQAHTHAHSHP. Residues 120-130 show a composition bias toward low complexity; that stretch reads PQSHPQSNQPP. Residues 136-149 show a composition bias toward polar residues; sequence PNGSSSVSAIFSHQ.

It is found in the nucleus. The protein operates within mycotoxin biosynthesis; aflatoxin biosynthesis. Involved in the regulation of aflatoxin biosynthesis. May have a role in nitrate assimilation and sclerotial morphogenesis. This is Aflatoxin biosynthesis regulatory protein (aflR) from Aspergillus parasiticus.